The following is a 351-amino-acid chain: F-box protein At1g70590 (351 aa).

Residues 1–60 (MKQRTWPCRSEGSRFSSLSFLKPHDKDKRSRISSINKATAKSTTSSRSSSSSSSSRPPSN) form a disordered region. Residues 32–41 (ISSINKATAK) show a composition bias toward polar residues. Positions 42–59 (STTSSRSSSSSSSSRPPS) are enriched in low complexity. Residues 62-111 (FGDFSMLPYDILMKIAAPFSHPNLQAASLVCKSWRDALKPLRESMLLIRW) form the F-box domain. One copy of the Sel1-like repeat lies at 105–141 (SMLLIRWGKKYKHGRGGVRANLDKALDSFLKGAMRGS). One copy of the TPR repeat lies at 142–175 (TLAMVDAGLVYWERGEKEKAVNLYRRASELGDAV).

The polypeptide is F-box protein At1g70590 (Arabidopsis thaliana (Mouse-ear cress)).